Here is a 486-residue protein sequence, read N- to C-terminus: MLIFESSRPGRQARAQAPKPTAATNDLPERFLRQQPPALPEVSEMDVVRHYTGLSQKNFSIDTHFYPLGSCTMKYNPRACHTLASLPGFLERHPATPEAMSQGFLACLYELQDILAKMTGMQTMSLAPMAGAQGEFTGVAMIRAYHEARGDKERCEMLVPDAAHGTNPATATMCGFRVREIPTNPEGDVDLEALHKALGPQTAGIMLTNPSTLGIFDRNIQVIAQSVHKAGGLLYYDGANLNAILGKVKPGDMGFDVIHLNLHKTFSTPHGGGGPGSGPVGVGEKLLPFLPVPRVARAEGGSYRWLTAEDCPQTIGPLSAWMGNAGVLLRAYIYVRLLGLEGMKRVADFSALNANYLAQRMAEAGFDLAYPMRRAGHEFVVTLKRQAKELGVTATDFAKRLLDLGFHAPTIYFPLLVPECLLIEPAETESKQTLDAFVAAMEQIAKEAQENPELLKQAPHTLPARRLDEVKAAKELDLAWKPTPHE.

Residues 1-26 (MLIFESSRPGRQARAQAPKPTAATND) form a disordered region. N6-(pyridoxal phosphate)lysine is present on Lys-264.

Belongs to the GcvP family. C-terminal subunit subfamily. In terms of assembly, the glycine cleavage system is composed of four proteins: P, T, L and H. In this organism, the P 'protein' is a heterodimer of two subunits. It depends on pyridoxal 5'-phosphate as a cofactor.

The catalysed reaction is N(6)-[(R)-lipoyl]-L-lysyl-[glycine-cleavage complex H protein] + glycine + H(+) = N(6)-[(R)-S(8)-aminomethyldihydrolipoyl]-L-lysyl-[glycine-cleavage complex H protein] + CO2. In terms of biological role, the glycine cleavage system catalyzes the degradation of glycine. The P protein binds the alpha-amino group of glycine through its pyridoxal phosphate cofactor; CO(2) is released and the remaining methylamine moiety is then transferred to the lipoamide cofactor of the H protein. In Nitrosococcus oceani (strain ATCC 19707 / BCRC 17464 / JCM 30415 / NCIMB 11848 / C-107), this protein is Probable glycine dehydrogenase (decarboxylating) subunit 2.